Consider the following 201-residue polypeptide: Recombination protein RecR (201 aa).

A C4-type zinc finger spans residues 60–75; it reads CRSCGNVDTSDPCTIC. The Toprim domain occupies 83-178; it reads TTLVVVEDVS…TVTRLAHGVP (96 aa).

Belongs to the RecR family.

In terms of biological role, may play a role in DNA repair. It seems to be involved in an RecBC-independent recombinational process of DNA repair. It may act with RecF and RecO. The polypeptide is Recombination protein RecR (Methylorubrum extorquens (strain CM4 / NCIMB 13688) (Methylobacterium extorquens)).